The following is a 282-amino-acid chain: Phosphatidylglycerol--prolipoprotein diacylglyceryl transferase (282 aa).

The next 3 helical transmembrane spans lie at I19–W39, I58–G78, and G104–Y124. R149 is a binding site for a 1,2-diacyl-sn-glycero-3-phospho-(1'-sn-glycerol). Helical transmembrane passes span A190–L210, G214–F234, and M250–I270.

This sequence belongs to the Lgt family.

It localises to the cell inner membrane. It carries out the reaction L-cysteinyl-[prolipoprotein] + a 1,2-diacyl-sn-glycero-3-phospho-(1'-sn-glycerol) = an S-1,2-diacyl-sn-glyceryl-L-cysteinyl-[prolipoprotein] + sn-glycerol 1-phosphate + H(+). It participates in protein modification; lipoprotein biosynthesis (diacylglyceryl transfer). Its function is as follows. Catalyzes the transfer of the diacylglyceryl group from phosphatidylglycerol to the sulfhydryl group of the N-terminal cysteine of a prolipoprotein, the first step in the formation of mature lipoproteins. In Bradyrhizobium diazoefficiens (strain JCM 10833 / BCRC 13528 / IAM 13628 / NBRC 14792 / USDA 110), this protein is Phosphatidylglycerol--prolipoprotein diacylglyceryl transferase.